We begin with the raw amino-acid sequence, 431 residues long: Histidinol dehydrogenase 1 (431 aa).

NAD(+)-binding residues include tyrosine 127, glutamine 188, and asparagine 211. 3 residues coordinate substrate: serine 234, glutamine 256, and histidine 259. Glutamine 256 and histidine 259 together coordinate Zn(2+). Active-site proton acceptor residues include glutamate 324 and histidine 325. The substrate site is built by histidine 325, aspartate 358, glutamate 412, and histidine 417. Residue aspartate 358 coordinates Zn(2+). Histidine 417 lines the Zn(2+) pocket.

It belongs to the histidinol dehydrogenase family. Zn(2+) serves as cofactor.

It catalyses the reaction L-histidinol + 2 NAD(+) + H2O = L-histidine + 2 NADH + 3 H(+). It functions in the pathway amino-acid biosynthesis; L-histidine biosynthesis; L-histidine from 5-phospho-alpha-D-ribose 1-diphosphate: step 9/9. Functionally, catalyzes the sequential NAD-dependent oxidations of L-histidinol to L-histidinaldehyde and then to L-histidine. This Nostoc sp. (strain PCC 7120 / SAG 25.82 / UTEX 2576) protein is Histidinol dehydrogenase 1 (hisD1).